A 125-amino-acid chain; its full sequence is Small ribosomal subunit protein bS6 (125 aa).

This sequence belongs to the bacterial ribosomal protein bS6 family.

In terms of biological role, binds together with bS18 to 16S ribosomal RNA. In Baumannia cicadellinicola subsp. Homalodisca coagulata, this protein is Small ribosomal subunit protein bS6.